The sequence spans 306 residues: Mitochondrial brown fat uncoupling protein 1 (306 aa).

Over 1 to 10 (MVGTTTTDVP) the chain is Mitochondrial intermembrane. A helical transmembrane segment spans residues 11-32 (PTMGVKIFSAGVAACLADVITF). 3 Solcar repeats span residues 11 to 102 (PTMG…VQEF), 110 to 200 (PSLG…MKGA), and 209 to 294 (DDVP…LKGE). The Mitochondrial matrix portion of the chain corresponds to 33-73 (PLDTAKVRQQIQGEFPITSGIRYKGVLGTITTLAKTEGPLK). Position 56 (lysine 56) interacts with fatty acid 16:0. A helical membrane pass occupies residues 74–96 (LYSGLPAGLQRQISFASLRIGLY). Over 97 to 115 (DTVQEFFTSGEETPSLGSK) the chain is Mitochondrial intermembrane. The chain crosses the membrane as a helical span at residues 116 to 132 (ISAGLTTGGVAVFIGQP). Residues 133-177 (TEVVKVRLQAQSHLHGLKPRYTGTYNAYRIIATTESLTSLWKGTT) lie on the Mitochondrial matrix side of the membrane. A helical membrane pass occupies residues 178–194 (PNLLRNVIINCTELVTY). Topologically, residues 195–211 (DLMKGALVRNEILADDV) are mitochondrial intermembrane. Residues 212 to 231 (PCHFVSALIAGFCTTLLSSP) form a helical membrane-spanning segment. Over 232–265 (VDVVKTRFINSPPGQYASVPNCAMTMFTKEGPTA) the chain is Mitochondrial matrix. At cysteine 253 the chain carries Cysteine sulfenic acid (-SOH). The chain crosses the membrane as a helical span at residues 266–288 (FFKGFVPSFLRLGSWNVIMFVCF). Residue lysine 268 participates in fatty acid 16:0 binding. Over 289-306 (EKLKGELMRSRQTVDCAT) the chain is Mitochondrial intermembrane.

It belongs to the mitochondrial carrier (TC 2.A.29) family. In terms of assembly, most probably functions as a monomer. Binds one purine nucleotide per monomer. However, has also been suggested to function as a homodimer or a homotetramer. Tightly associates with cardiolipin in the mitochondrion inner membrane; may stabilize and regulate its activity. In terms of processing, may undergo sulfenylation upon cold exposure. May increase the sensitivity of UCP1 thermogenic function to the activation by noradrenaline probably through structural effects. Post-translationally, may undergo ubiquitin-mediated proteasomal degradation. In terms of tissue distribution, brown adipose tissue.

It localises to the mitochondrion inner membrane. The enzyme catalyses H(+)(in) = H(+)(out). With respect to regulation, has no constitutive proton transporter activity and has to be activated by long-chain fatty acids/LCFAs. Inhibited by purine nucleotides. Both purine nucleotides and LCFAs bind the cytosolic side of the transporter and directly compete to activate or inhibit it. Activated by noradrenaline and reactive oxygen species. Despite lacking canonical translational encoding for selenocysteine, a small pool of the protein has been observed to selectively incorporate selenocysteine at 'Cys-253'. Selenocysteine-modified protein is highly sensitive to redox modification and may constitute a pool of protein highly sensitive to activation by elevated levels of reactive oxygen species (ROS). Its function is as follows. Mitochondrial protein responsible for thermogenic respiration, a specialized capacity of brown adipose tissue and beige fat that participates in non-shivering adaptive thermogenesis to temperature and diet variations and more generally to the regulation of energy balance. Functions as a long-chain fatty acid/LCFA and proton symporter, simultaneously transporting one LCFA and one proton through the inner mitochondrial membrane. However, LCFAs remaining associated with the transporter via their hydrophobic tails, it results in an apparent transport of protons activated by LCFAs. Thereby, dissipates the mitochondrial proton gradient and converts the energy of substrate oxydation into heat instead of ATP. Regulates the production of reactive oxygen species/ROS by mitochondria. The chain is Mitochondrial brown fat uncoupling protein 1 from Oryctolagus cuniculus (Rabbit).